Here is a 348-residue protein sequence, read N- to C-terminus: S-adenosylmethionine:tRNA ribosyltransferase-isomerase (348 aa).

The protein belongs to the QueA family. Monomer.

Its subcellular location is the cytoplasm. The catalysed reaction is 7-aminomethyl-7-carbaguanosine(34) in tRNA + S-adenosyl-L-methionine = epoxyqueuosine(34) in tRNA + adenine + L-methionine + 2 H(+). Its pathway is tRNA modification; tRNA-queuosine biosynthesis. In terms of biological role, transfers and isomerizes the ribose moiety from AdoMet to the 7-aminomethyl group of 7-deazaguanine (preQ1-tRNA) to give epoxyqueuosine (oQ-tRNA). In Alteromonas mediterranea (strain DSM 17117 / CIP 110805 / LMG 28347 / Deep ecotype), this protein is S-adenosylmethionine:tRNA ribosyltransferase-isomerase.